Consider the following 158-residue polypeptide: C-type lectin galactose-binding isoform (158 aa).

Positions methionine 1 to serine 23 are cleaved as a signal peptide. Disulfide bonds link cysteine 26-cysteine 37, cysteine 54-cysteine 154, and cysteine 129-cysteine 146. The C-type lectin domain occupies arginine 33 to glutamine 155. Glutamine 119, aspartate 121, and glutamate 127 together coordinate Ca(2+). Positions glutamine 119–aspartate 121 match the Galactose-binding motif. N-linked (GlcNAc...) asparagine glycosylation occurs at asparagine 134. Ca(2+)-binding residues include asparagine 142 and aspartate 143.

It belongs to the true venom lectin family. Dimer. Probably disulfide-linked homodimer. Expressed by the venom gland.

The protein localises to the secreted. Functionally, galactose-binding lectin that binds to and agglutinates erythrocytes in a calcium-dependent manner. This is C-type lectin galactose-binding isoform from Pseudechis australis (Mulga snake).